We begin with the raw amino-acid sequence, 497 residues long: Cytochrome P450 2D6 (497 aa).

Asp-301 contributes to the substrate binding site. Position 443 (Cys-443) interacts with heme.

The protein belongs to the cytochrome P450 family. The cofactor is heme.

It localises to the endoplasmic reticulum membrane. It is found in the microsome membrane. It carries out the reaction (5Z,8Z,11Z,14Z)-eicosatetraenoate + reduced [NADPH--hemoprotein reductase] + O2 = (8R,9S)-epoxy-(5Z,11Z,14Z)-eicosatrienoate + oxidized [NADPH--hemoprotein reductase] + H2O + H(+). The catalysed reaction is (5Z,8Z,11Z,14Z)-eicosatetraenoate + reduced [NADPH--hemoprotein reductase] + O2 = (11R,12S)-epoxy-(5Z,8Z,14Z)-eicosatrienoate + oxidized [NADPH--hemoprotein reductase] + H2O + H(+). The enzyme catalyses (5Z,8Z,11Z,14Z)-eicosatetraenoate + reduced [NADPH--hemoprotein reductase] + O2 = (14S,15R)-epoxy-(5Z,8Z,11Z)-eicosatrienoate + oxidized [NADPH--hemoprotein reductase] + H2O + H(+). It catalyses the reaction N-(5Z,8Z,11Z,14Z-eicosatetraenoyl)-ethanolamine + reduced [NADPH--hemoprotein reductase] + O2 = N-(8,9-epoxy-5Z,11Z,14Z-eicosatrienoyl)-ethanolamine + oxidized [NADPH--hemoprotein reductase] + H2O + H(+). It carries out the reaction N-(5Z,8Z,11Z,14Z-eicosatetraenoyl)-ethanolamine + reduced [NADPH--hemoprotein reductase] + O2 = N-(11,12-epoxy-5Z,8Z,14Z-eicosatrienoyl)-ethanolamine + oxidized [NADPH--hemoprotein reductase] + H2O + H(+). The catalysed reaction is N-(5Z,8Z,11Z,14Z-eicosatetraenoyl)-ethanolamine + reduced [NADPH--hemoprotein reductase] + O2 = N-(14,15-epoxy-5Z,8Z,11Z-eicosatrienoyl)-ethanolamine + oxidized [NADPH--hemoprotein reductase] + H2O + H(+). The enzyme catalyses N-(5Z,8Z,11Z,14Z-eicosatetraenoyl)-ethanolamine + reduced [NADPH--hemoprotein reductase] + O2 = N-(20-hydroxy-5Z,8Z,11Z,14Z-eicosatetraenoyl)-ethanolamine + oxidized [NADPH--hemoprotein reductase] + H2O + H(+). It catalyses the reaction (5Z,8Z,11Z,14Z,17Z)-eicosapentaenoate + reduced [NADPH--hemoprotein reductase] + O2 = (17S,18R)-epoxy-(5Z,8Z,11Z,14Z)-eicosatetraenoate + oxidized [NADPH--hemoprotein reductase] + H2O + H(+). It carries out the reaction (4Z,7Z,10Z,13Z,16Z,19Z)-docosahexaenoate + reduced [NADPH--hemoprotein reductase] + O2 = (19R,20S)-epoxy-(4Z,7Z,10Z,13Z,16Z)-docosapentaenoate + oxidized [NADPH--hemoprotein reductase] + H2O + H(+). The catalysed reaction is (4Z,7Z,10Z,13Z,16Z,19Z)-docosahexaenoate + reduced [NADPH--hemoprotein reductase] + O2 = (19S,20R)-epoxy-(4Z,7Z,10Z,13Z,16Z)-docosapentaenoate + oxidized [NADPH--hemoprotein reductase] + H2O + H(+). The enzyme catalyses cholesterol + reduced [NADPH--hemoprotein reductase] + O2 = 25-hydroxycholesterol + oxidized [NADPH--hemoprotein reductase] + H2O + H(+). It catalyses the reaction all-trans-retinol + reduced [NADPH--hemoprotein reductase] + O2 = all-trans-retinal + oxidized [NADPH--hemoprotein reductase] + 2 H2O + H(+). Its pathway is cofactor metabolism; retinol metabolism. It participates in lipid metabolism; fatty acid metabolism. The protein operates within steroid metabolism; cholesterol metabolism. In terms of biological role, a cytochrome P450 monooxygenase involved in the metabolism of fatty acids, steroids and retinoids. Mechanistically, uses molecular oxygen inserting one oxygen atom into a substrate, and reducing the second into a water molecule, with two electrons provided by NADPH via cytochrome P450 reductase (NADPH--hemoprotein reductase). Catalyzes the epoxidation of double bonds of polyunsaturated fatty acids (PUFA). Metabolizes endocannabinoid arachidonoylethanolamide (anandamide) to 20-hydroxyeicosatetraenoic acid ethanolamide (20-HETE-EA) and 8,9-, 11,12-, and 14,15-epoxyeicosatrienoic acid ethanolamides (EpETrE-EAs), potentially modulating endocannabinoid system signaling. Catalyzes the hydroxylation of carbon-hydrogen bonds. Metabolizes cholesterol toward 25-hydroxycholesterol, a physiological regulator of cellular cholesterol homeostasis. Catalyzes the oxidative transformations of all-trans retinol to all-trans retinal, a precursor for the active form all-trans-retinoic acid. Also involved in the oxidative metabolism of drugs such as antiarrhythmics, adrenoceptor antagonists, and tricyclic antidepressants. The sequence is that of Cytochrome P450 2D6 from Homo sapiens (Human).